Reading from the N-terminus, the 452-residue chain is UDP-N-acetylmuramate--L-alanine ligase (452 aa).

ATP is bound at residue 121–127 (GTHGKTT).

It belongs to the MurCDEF family.

The protein localises to the cytoplasm. The catalysed reaction is UDP-N-acetyl-alpha-D-muramate + L-alanine + ATP = UDP-N-acetyl-alpha-D-muramoyl-L-alanine + ADP + phosphate + H(+). It participates in cell wall biogenesis; peptidoglycan biosynthesis. Its function is as follows. Cell wall formation. The sequence is that of UDP-N-acetylmuramate--L-alanine ligase from Christiangramia forsetii (strain DSM 17595 / CGMCC 1.15422 / KT0803) (Gramella forsetii).